The primary structure comprises 213 residues: Cell division protein SepF 2 (213 aa).

The tract at residues 16 to 63 is disordered; it reads EDDGYDGRGFDPDDDFEPELDPEPERDRRRHEPPHQSHQALHPQRDES. The segment covering 27–39 has biased composition (acidic residues); sequence PDDDFEPELDPEP.

Belongs to the SepF family. Homodimer. Interacts with FtsZ.

Its subcellular location is the cytoplasm. In terms of biological role, cell division protein that is part of the divisome complex and is recruited early to the Z-ring. Probably stimulates Z-ring formation, perhaps through the cross-linking of FtsZ protofilaments. Its function overlaps with FtsA. The protein is Cell division protein SepF 2 of Streptomyces avermitilis (strain ATCC 31267 / DSM 46492 / JCM 5070 / NBRC 14893 / NCIMB 12804 / NRRL 8165 / MA-4680).